A 353-amino-acid chain; its full sequence is Protein-arginine kinase (353 aa).

Residues 24-256 (IVLSSRIRLA…RTVIDTEEQA (233 aa)) enclose the Phosphagen kinase C-terminal domain. Residues 27-31 (SSRIR), His-93, Arg-127, 178-182 (RASVM), and 209-214 (RGLYGE) each bind ATP. Positions 339–344 (RDVRRA) match the RDXXRA motif of the pArg binding pocket involved in allosteric regulation motif.

The protein belongs to the ATP:guanido phosphotransferase family.

It catalyses the reaction L-arginyl-[protein] + ATP = N(omega)-phospho-L-arginyl-[protein] + ADP + H(+). Its activity is regulated as follows. Appears to be allosterically activated by the binding of pArg-containing polypeptides to the pArg-binding pocket localized in the C-terminal domain of McsB. In terms of biological role, catalyzes the specific phosphorylation of arginine residues in proteins. In Symbiobacterium thermophilum (strain DSM 24528 / JCM 14929 / IAM 14863 / T), this protein is Protein-arginine kinase.